Reading from the N-terminus, the 334-residue chain is ADP-L-glycero-D-manno-heptose-6-epimerase (334 aa).

NADP(+)-binding positions include 11–12 (FI), 32–33 (DN), K39, K54, 77–81 (QGACS), and N94. Residue Y141 is the Proton acceptor of the active site. An NADP(+)-binding site is contributed by K145. N171 provides a ligand contact to substrate. NADP(+) contacts are provided by V172 and K180. K180 (proton acceptor) is an active-site residue. Residues R182, H189, 203 to 206 (FGSN), R216, and Y295 each bind substrate.

The protein belongs to the NAD(P)-dependent epimerase/dehydratase family. HldD subfamily. As to quaternary structure, homopentamer. NADP(+) serves as cofactor.

The enzyme catalyses ADP-D-glycero-beta-D-manno-heptose = ADP-L-glycero-beta-D-manno-heptose. It participates in nucleotide-sugar biosynthesis; ADP-L-glycero-beta-D-manno-heptose biosynthesis; ADP-L-glycero-beta-D-manno-heptose from D-glycero-beta-D-manno-heptose 7-phosphate: step 4/4. Its pathway is bacterial outer membrane biogenesis; LOS core biosynthesis. Catalyzes the interconversion between ADP-D-glycero-beta-D-manno-heptose and ADP-L-glycero-beta-D-manno-heptose via an epimerization at carbon 6 of the heptose. This chain is ADP-L-glycero-D-manno-heptose-6-epimerase, found in Neisseria meningitidis serogroup B (strain ATCC BAA-335 / MC58).